The following is a 306-amino-acid chain: Glutaminase (306 aa).

Substrate-binding residues include S64, N115, E159, N166, Y190, Y242, and V260.

Belongs to the glutaminase family. As to quaternary structure, homotetramer.

The catalysed reaction is L-glutamine + H2O = L-glutamate + NH4(+). The sequence is that of Glutaminase from Vibrio cholerae serotype O1 (strain ATCC 39315 / El Tor Inaba N16961).